An 867-amino-acid chain; its full sequence is Prominin-1 (867 aa).

The N-terminal stretch at 1–19 (MALVFSALLLLGLCGKISS) is a signal peptide. The Extracellular portion of the chain corresponds to 20–107 (EGQPAFHNTP…VLALKIALYE (88 aa)). The helical transmembrane segment at 108 to 128 (IGVLICAILGLLFIILMPLVG) threads the bilayer. Residues 129–158 (CFFCMCRCCNKCGGEMHQRQKQNAPCRRKC) are Cytoplasmic-facing. Residues 159-179 (LGLSLLVICLLMSLGIIYGFV) form a helical membrane-spanning segment. The Extracellular portion of the chain corresponds to 180–434 (ANQQTRTRIK…LPKLEEYDSY (255 aa)). 3 positions are modified to N6-acetyllysine: K226, K258, and K265. 5 N-linked (GlcNAc...) asparagine glycosylation sites follow: N273, N291, N332, N374, and N415. The helical transmembrane segment at 435-455 (WWLGGLIVCFLLTLIVTFFFL) threads the bilayer. Topologically, residues 456-487 (GLLCGVFGYDKHATPTRRGCVSNTGGIFLMAG) are cytoplasmic. A helical transmembrane segment spans residues 488–508 (VGFGFLFCWILMILVVLTFVV). At 509–794 (GANVEKLLCE…LCGYVADPLN (286 aa)) the chain is on the extracellular side. N554, N581, and N732 each carry an N-linked (GlcNAc...) asparagine glycan. The chain crosses the membrane as a helical span at residues 795–815 (LFWFGIGKATVLLLPAVIIAI). Residues 816–867 (KLAKYYRRMDSEDVYDDVETVPMKNLEIGSNGYHKDHLYGVHNPVMTSPSRY) are Cytoplasmic-facing. S865 is subject to Phosphoserine.

It belongs to the prominin family. In terms of assembly, interacts with CDHR1 and with actin filaments. Interacts with NAT8 and NAT8B. In terms of processing, acetylation at Lys-226, Lys-258 and Lys-265 by NAT8 and NAT8B may control PROM1 protein expression and its function in cell apoptosis. In terms of tissue distribution, in the submandibular gland, expressed on the apical side of epithelial cells. In the parotid gland, expressed in the intercalated ducts. In the sublingual gland, expressed in intercalated ducts. In the extraorbital lacrimal gland, expressed in the intercalated tubules and larger intralobular ducts. Expressed in the retina. Present in urine within small membrane particles (at protein level). In the embryo, expressed on the apical side of neuroepithelial cells and of other epithelia such as lung buds, gut and ureter buds. In the adult, expressed at the apical side of the kidney tubules and of the ependymal layer of the brain. Not expressed in gut, liver, lung, pituitary, adrenal, heart or spleen. Localized to the nascent disk membranes at the base of the rod outer segment in the retina (at protein level).

The protein localises to the apical cell membrane. It localises to the cell projection. It is found in the microvillus membrane. The protein resides in the cilium. Its subcellular location is the photoreceptor outer segment. The protein localises to the endoplasmic reticulum. It localises to the endoplasmic reticulum-Golgi intermediate compartment. In terms of biological role, may play a role in cell differentiation, proliferation and apoptosis. Binds cholesterol in cholesterol-containing plasma membrane microdomains and may play a role in the organization of the apical plasma membrane in epithelial cells. During early retinal development acts as a key regulator of disk morphogenesis. Involved in regulation of MAPK and Akt signaling pathways. In neuroblastoma cells suppresses cell differentiation such as neurite outgrowth in a RET-dependent manner. This is Prominin-1 (Prom1) from Mus musculus (Mouse).